The sequence spans 356 residues: Probable farnesyl diphosphate synthase DDB_G0278823 (356 aa).

Residues Lys-55, Arg-58, and Gln-94 each contribute to the isopentenyl diphosphate site. Mg(2+) is bound by residues Asp-101 and Asp-105. Arg-110 lines the dimethylallyl diphosphate pocket. Residue Arg-111 participates in isopentenyl diphosphate binding. Residues Lys-203, Thr-204, Gln-243, Lys-260, and Lys-269 each contribute to the dimethylallyl diphosphate site.

The protein belongs to the FPP/GGPP synthase family. Mg(2+) serves as cofactor.

The protein resides in the cytoplasm. It carries out the reaction isopentenyl diphosphate + dimethylallyl diphosphate = (2E)-geranyl diphosphate + diphosphate. The catalysed reaction is isopentenyl diphosphate + (2E)-geranyl diphosphate = (2E,6E)-farnesyl diphosphate + diphosphate. The protein operates within isoprenoid biosynthesis; farnesyl diphosphate biosynthesis; farnesyl diphosphate from geranyl diphosphate and isopentenyl diphosphate: step 1/1. It functions in the pathway isoprenoid biosynthesis; geranyl diphosphate biosynthesis; geranyl diphosphate from dimethylallyl diphosphate and isopentenyl diphosphate: step 1/1. Inhibited by aminobisphosphonate drugs (aBP), such as risedronate and alendronate. Key enzyme in isoprenoid biosynthesis which catalyzes the formation of farnesyl diphosphate (FPP), a sterol precursor. In Dictyostelium discoideum (Social amoeba), this protein is Probable farnesyl diphosphate synthase DDB_G0278823.